The following is a 78-amino-acid chain: Large ribosomal subunit protein bL28 (78 aa).

Belongs to the bacterial ribosomal protein bL28 family.

The protein is Large ribosomal subunit protein bL28 of Parasynechococcus marenigrum (strain WH8102).